Reading from the N-terminus, the 389-residue chain is Probable nitrate transporter NarT (389 aa).

12 helical membrane passes run 14–34 (TLSL…MPFI), 45–65 (ISII…PFGY), 69–89 (IVGA…PIFF), 97–117 (GMLM…SVGV), 139–159 (GNIG…IIGW), 161–181 (TTVR…FIFG), 211–231 (WYFI…NYLV), 246–266 (GVFI…GDKF), 268–288 (AVKV…ILGI), 294–314 (LFTV…GLIF), 331–351 (IVSM…TYVA), and 353–373 (LTGS…IALF).

This sequence belongs to the major facilitator superfamily. Nitrate/nitrite porter (TC 2.A.1.8) family.

Its subcellular location is the cell membrane. Functionally, probably required for nitrate uptake under anoxic conditions. Also possibly involved in excretion of nitrite produced by the dissimilatory reduction of nitrate. The protein is Probable nitrate transporter NarT (narT) of Staphylococcus aureus (strain JH9).